Here is a 154-residue protein sequence, read N- to C-terminus: 3-hydroxyacyl-[acyl-carrier-protein] dehydratase FabZ (154 aa).

Residue H60 is part of the active site.

The protein belongs to the thioester dehydratase family. FabZ subfamily.

It localises to the cytoplasm. It catalyses the reaction a (3R)-hydroxyacyl-[ACP] = a (2E)-enoyl-[ACP] + H2O. Involved in unsaturated fatty acids biosynthesis. Catalyzes the dehydration of short chain beta-hydroxyacyl-ACPs and long chain saturated and unsaturated beta-hydroxyacyl-ACPs. The sequence is that of 3-hydroxyacyl-[acyl-carrier-protein] dehydratase FabZ from Synechococcus sp. (strain CC9311).